Consider the following 206-residue polypeptide: Small ribosomal subunit protein uS4 (206 aa).

A disordered region spans residues Tyr28 to Ser48. Residues Met95–Gly160 form the S4 RNA-binding domain.

It belongs to the universal ribosomal protein uS4 family. As to quaternary structure, part of the 30S ribosomal subunit. Contacts protein S5. The interaction surface between S4 and S5 is involved in control of translational fidelity.

Its function is as follows. One of the primary rRNA binding proteins, it binds directly to 16S rRNA where it nucleates assembly of the body of the 30S subunit. Functionally, with S5 and S12 plays an important role in translational accuracy. The polypeptide is Small ribosomal subunit protein uS4 (Paenarthrobacter aurescens (strain TC1)).